Here is a 209-residue protein sequence, read N- to C-terminus: Egg case collagen (209 aa).

The interval Val1–Val129 is nonhelical region. The segment at Leu130–Val209 is triple-helical region. Residues Pro138–Val209 are disordered. A compositionally biased stretch (gly residues) spans Gly142–Gly162.

Functionally, major component of the egg case wall which is secreted by the oviduct. The egg case combines mechanical strength and toughness with high permeability to small molecules and ions. The protein is Egg case collagen of Scyliorhinus canicula (Small-spotted catshark).